Here is a 311-residue protein sequence, read N- to C-terminus: Immune-associated nucleotide-binding protein 7 (311 aa).

One can recognise an AIG1-type G domain in the interval 14-222; that stretch reads KQAENIVLVG…YTDDTYHMIK (209 aa). Positions 23-30 are G1; it reads GRTGNGKS. GTP contacts are provided by residues 23–31 and Ser44; that span reads GRTGNGKSA. The segment at 50 to 54 is G2; that stretch reads GVTMK. Residues 72-75 are G3; it reads DTPG. The tract at residues 142 to 145 is G4; that stretch reads TGGD. Residues 181–183 are G5; sequence DNK. Asn182 lines the GTP pocket. A coiled-coil region spans residues 218-295; sequence YHMIKEESEK…TQENNELNLA (78 aa).

The protein belongs to the TRAFAC class TrmE-Era-EngA-EngB-Septin-like GTPase superfamily. AIG1/Toc34/Toc159-like paraseptin GTPase family. IAN subfamily. In terms of tissue distribution, ubiquitous.

In Arabidopsis thaliana (Mouse-ear cress), this protein is Immune-associated nucleotide-binding protein 7.